The following is a 279-amino-acid chain: Ribosomal RNA small subunit methyltransferase A (279 aa).

S-adenosyl-L-methionine contacts are provided by histidine 10, leucine 12, glycine 37, glutamate 58, aspartate 83, and asparagine 108.

This sequence belongs to the class I-like SAM-binding methyltransferase superfamily. rRNA adenine N(6)-methyltransferase family. RsmA subfamily.

The protein localises to the cytoplasm. It carries out the reaction adenosine(1518)/adenosine(1519) in 16S rRNA + 4 S-adenosyl-L-methionine = N(6)-dimethyladenosine(1518)/N(6)-dimethyladenosine(1519) in 16S rRNA + 4 S-adenosyl-L-homocysteine + 4 H(+). In terms of biological role, specifically dimethylates two adjacent adenosines (A1518 and A1519) in the loop of a conserved hairpin near the 3'-end of 16S rRNA in the 30S particle. May play a critical role in biogenesis of 30S subunits. The sequence is that of Ribosomal RNA small subunit methyltransferase A from Synechococcus elongatus (strain ATCC 33912 / PCC 7942 / FACHB-805) (Anacystis nidulans R2).